The sequence spans 293 residues: Cell division protein FtsQ (293 aa).

Topologically, residues 1–29 (MSQVRSKSQQGKRQAKPQEVVPATILTEQ) are cytoplasmic. A helical membrane pass occupies residues 30-52 (LSTYAFGTVTAGAVMVAVAAWMG). Topologically, residues 53 to 293 (GSLASIDERI…SQIDDKSGGA (241 aa)) are periplasmic. Residues 75 to 144 (FTVTKISIEG…NDIWILAENR (70 aa)) enclose the POTRA domain.

Belongs to the FtsQ/DivIB family. FtsQ subfamily.

The protein resides in the cell inner membrane. In terms of biological role, essential cell division protein. The polypeptide is Cell division protein FtsQ (Hirschia baltica (strain ATCC 49814 / DSM 5838 / IFAM 1418)).